The sequence spans 35 residues: Photosystem II reaction center protein M (35 aa).

The chain crosses the membrane as a helical span at residues 5–25 (ILAFIATALFILVPTAFLLII).

The protein belongs to the PsbM family. PSII is composed of 1 copy each of membrane proteins PsbA, PsbB, PsbC, PsbD, PsbE, PsbF, PsbH, PsbI, PsbJ, PsbK, PsbL, PsbM, PsbT, PsbX, PsbY, PsbZ, Psb30/Ycf12, at least 3 peripheral proteins of the oxygen-evolving complex and a large number of cofactors. It forms dimeric complexes.

The protein resides in the plastid. It localises to the chloroplast thylakoid membrane. One of the components of the core complex of photosystem II (PSII). PSII is a light-driven water:plastoquinone oxidoreductase that uses light energy to abstract electrons from H(2)O, generating O(2) and a proton gradient subsequently used for ATP formation. It consists of a core antenna complex that captures photons, and an electron transfer chain that converts photonic excitation into a charge separation. This subunit is found at the monomer-monomer interface. This is Photosystem II reaction center protein M from Amborella trichopoda.